The following is a 571-amino-acid chain: Quinone-dependent D-lactate dehydrogenase (571 aa).

One can recognise an FAD-binding PCMH-type domain in the interval Gly-42–Asp-213. Residues Ala-76–Gly-80, Gly-84–Ser-85, Gly-143, Ser-150, Gly-160, and Val-262 contribute to the FAD site. The tract at residues Arg-546–Glu-571 is disordered.

It belongs to the quinone-dependent D-lactate dehydrogenase family. FAD is required as a cofactor.

It localises to the cell inner membrane. It carries out the reaction (R)-lactate + a quinone = a quinol + pyruvate. With respect to regulation, inhibited by 2-hydroxy-3-butynoic acid, but not by p-chloromercuribenzoate, n-ethylmaleimide, or 5,5'-dithiobis(2-nitrobenzoic acid). In terms of biological role, catalyzes the oxidation of D-lactate to pyruvate. Electrons derived from D-lactate oxidation are transferred to the ubiquinone/cytochrome electron transfer chain, where they may be used to provide energy for the active transport of a variety of amino acids and sugars across the membrane. In Escherichia coli (strain K12), this protein is Quinone-dependent D-lactate dehydrogenase.